Reading from the N-terminus, the 331-residue chain is Ferrochelatase (331 aa).

Fe cation-binding residues include histidine 187 and glutamate 286.

Belongs to the ferrochelatase family.

The protein resides in the cytoplasm. It catalyses the reaction heme b + 2 H(+) = protoporphyrin IX + Fe(2+). It functions in the pathway porphyrin-containing compound metabolism; protoheme biosynthesis; protoheme from protoporphyrin-IX: step 1/1. Its function is as follows. Catalyzes the ferrous insertion into protoporphyrin IX. This is Ferrochelatase from Legionella pneumophila (strain Paris).